The sequence spans 447 residues: Cysteine--tRNA ligase (447 aa).

Cysteine 28 contacts Zn(2+). A 'HIGH' region motif is present at residues 30 to 40; it reads PTVYNYIHIGN. Residues cysteine 211, histidine 236, and glutamate 240 each contribute to the Zn(2+) site. Positions 268 to 272 match the 'KMSKS' region motif; it reads KMSKS. ATP is bound at residue lysine 271.

This sequence belongs to the class-I aminoacyl-tRNA synthetase family. As to quaternary structure, monomer. Zn(2+) serves as cofactor.

The protein resides in the cytoplasm. It carries out the reaction tRNA(Cys) + L-cysteine + ATP = L-cysteinyl-tRNA(Cys) + AMP + diphosphate. The protein is Cysteine--tRNA ligase of Streptococcus pyogenes serotype M1.